The primary structure comprises 37 residues: Large ribosomal subunit protein bL36 (37 aa).

The protein belongs to the bacterial ribosomal protein bL36 family.

This Geobacillus kaustophilus (strain HTA426) protein is Large ribosomal subunit protein bL36.